A 491-amino-acid polypeptide reads, in one-letter code: AP-2 complex subunit mu (491 aa).

A phosphoserine mark is found at Ser179, Ser180, and Ser181. The region spanning 209–490 (KDEVFLYVNE…ISKAGSYEVR (282 aa)) is the MHD domain.

The protein belongs to the adaptor complexes medium subunit family. As to quaternary structure, adaptor protein complex 2 (AP-2) is a heterotetramer composed of two large adaptins (alpha-type subunit APL3 and beta-type subunit APL1), a medium chain (mu-type subunit APM4) and a small adaptin (sigma-type subunit APS2).

The protein localises to the membrane. It is found in the clathrin-coated pit. The protein resides in the cytoplasmic vesicle. Its subcellular location is the clathrin-coated vesicle membrane. Its function is as follows. Component of the adaptor complexes which link clathrin to receptors in coated vesicles. Clathrin-associated protein complexes are believed to interact with the cytoplasmic tails of membrane proteins, leading to their selection and concentration. In Saccharomyces cerevisiae (strain ATCC 204508 / S288c) (Baker's yeast), this protein is AP-2 complex subunit mu (APM4).